A 357-amino-acid polypeptide reads, in one-letter code: Zinc finger protein 830 (357 aa).

Residues 47–69 (CVVCNIQIKSELLWPAHILGKQH) form a C2H2-type zinc finger. 3 disordered regions span residues 98 to 126 (RKGSEPENQESKRIKGTEDQPTALKTKLP), 157 to 194 (DDDEVEGEEYENVNEASTSLQKPAEIPLPPPTSSADRL), and 231 to 255 (ALPEGFFDDPEADAKVRKVDAPKDQ). A compositionally biased stretch (basic and acidic residues) spans 99-115 (KGSEPENQESKRIKGTE). The span at 157–168 (DDDEVEGEEYEN) shows a compositional bias: acidic residues. Over residues 242 to 255 (ADAKVRKVDAPKDQ) the composition is skewed to basic and acidic residues. Residues 279 to 325 (AEEDEEGRLDRQIDEIDEQIECYRRVEHLRDLKDTLQDAKMEVLKSK) adopt a coiled-coil conformation.

The protein resides in the nucleus. It localises to the chromosome. It is found in the nucleus speckle. In terms of biological role, may act as an important regulator of the cell cycle that participates in the maintenance of genome integrity. This is Zinc finger protein 830 from Xenopus tropicalis (Western clawed frog).